The chain runs to 5084 residues: Apicidin F synthase (5084 aa).

The interval 209–606 (ARILQRQPDK…VGRLDSQVKL (398 aa)) is adenylation 1. The region spanning 731–808 (HETDNCQRLL…EAASSMREVV (78 aa)) is the Carrier 1 domain. Ser768 carries the O-(pantetheine 4'-phosphoryl)serine modification. Condensation stretches follow at residues 822–1124 (YPLS…FPIY) and 1309–1609 (EIYC…SILV). Residues 1788–2192 (EDPTREAVFS…IGRKDNQIKI (405 aa)) are adenylation 2. The region spanning 2341-2415 (VVKDDPVSEL…DMAKGMAPLS (75 aa)) is the Carrier 2 domain. An O-(pantetheine 4'-phosphoryl)serine modification is found at Ser2376. Residues 2415–2441 (SLTAPESTSSSSPQSFSTSTSTTIIEN) form a disordered region. Residues 2421–2437 (STSSSSPQSFSTSTSTT) show a composition bias toward low complexity. Residues 2478–2755 (EDIFPCTPMQ…IVTLPRQLNI (278 aa)) are condensation 3. An adenylation 3 region spans residues 2935-3328 (RNNPRARAVV…GRRDGQIKLR (394 aa)). Residues 3463–3539 (ETWSSSEAIV…DMASRLSRPE (77 aa)) enclose the Carrier 3 domain. Ser3500 bears the O-(pantetheine 4'-phosphoryl)serine mark. Residues 3581-3866 (EDIYPCTPLQ…IATVPSRTTI (286 aa)) form a condensation 4 region. Residues 4029–4426 (RKQVELSPSH…TVSWIGRKDH (398 aa)) are adenylation 4. Positions 4554–4631 (ALKTPKERLL…DMADLLGPLR (78 aa)) constitute a Carrier 4 domain. An O-(pantetheine 4'-phosphoryl)serine modification is found at Ser4592. Positions 4669–4948 (EQIYPCTAYQ…ISKLPLRIQL (280 aa)) are condensation 5.

It belongs to the NRP synthetase family.

Its pathway is secondary metabolite biosynthesis. In terms of biological role, non-ribosomal peptide synthetase; part of the gene cluster that mediates the biosynthesis of the cyclic tetrapeptide apicidin F (APF). The non-ribosomal peptide synthetase apf1 incorporates four different amino acids to produce apicidin F: L-phenylalanine, D-pipecolic acid (D-pip), N-methoxy-L-tryptophan and L-2-aminooctanedioic acid. L-Phenylalanine is the only proteinogenic amino acid directly used by apf1. The 3 other apf1 substrates are non-proteinogenic and have to be modified by other enzymes of the cluster. Lysine is converted to delta-1-pyrroline-5-carboxylate (P5C) which is reduced to L-pipecolic acid (L-pip) by apf3. L-pip is epimerized to D-pip, probably by apf1 activity, prior to incorporation. L-Tryptophan is N-oxidyzed by one of the cytochrome P450 monooxygenases (apf7 or apf8), and further methylated at the hydroxy group by the O-methyltransferase apf6 to yield N-methoxy-L-tryptophan. The synthesis of the fourth apf1 substrate is more complex. The fatty acid synthase apf5 is involved in the synthesis of the octanoic acid backbone of L-2-aminooctanedioic acid by fixing one acetyl-CoA unit and three malonyl-CoA units. Then one of the cytochrome P450 monooxygenases (apf7 or apf8) may oxidize this backbone to 2-oxooctanoic acid. The aminotransferase apf4 is predicted to catalyze the exchange of the keto group with an amino group. The next step would be the oxidation of 2-aminooctanoic acid by one of the cytochrome P450 monooxygenases (apf7 or apf8). The last step is the oxidation of 2-amino-8-hydroxyoctanoic acid to 2-aminooctanedioic acid is catalyzed by the FAD-dependent monooxygenase apf9. The sequence is that of Apicidin F synthase from Gibberella fujikuroi (strain CBS 195.34 / IMI 58289 / NRRL A-6831) (Bakanae and foot rot disease fungus).